The following is a 275-amino-acid chain: Glucan endo-1,3-beta-glucosidase, acidic isoform PR-N (275 aa).

The active-site Nucleophile is the glutamate 196.

Belongs to the glycosyl hydrolase 17 family. Post-translationally, the N-terminus is blocked.

It is found in the secreted. Its subcellular location is the extracellular space. It carries out the reaction Hydrolysis of (1-&gt;3)-beta-D-glucosidic linkages in (1-&gt;3)-beta-D-glucans.. Functionally, implicated in the defense of plants against pathogens. This Nicotiana tabacum (Common tobacco) protein is Glucan endo-1,3-beta-glucosidase, acidic isoform PR-N (PRN).